Here is an 873-residue protein sequence, read N- to C-terminus: Probable beta-glucosidase A (873 aa).

Positions 1–19 (MRFGWLEVAALTAASVANA) are cleaved as a signal peptide. N-linked (GlcNAc...) asparagine glycans are attached at residues Asn71, Asn222, and Asn263. Asp291 is a catalytic residue. N-linked (GlcNAc...) asparagine glycosylation is found at Asn326, Asn333, Asn365, Asn453, Asn534, Asn553, Asn575, Asn679, and Asn725. Residues 730–765 (EDSSDDPNYGWEDSEYIPEGARDGSPQPLLKAGGAP) are disordered.

The protein belongs to the glycosyl hydrolase 3 family.

It localises to the secreted. It catalyses the reaction Hydrolysis of terminal, non-reducing beta-D-glucosyl residues with release of beta-D-glucose.. The protein operates within glycan metabolism; cellulose degradation. Its function is as follows. Beta-glucosidases are one of a number of cellulolytic enzymes involved in the degradation of cellulosic biomass. Catalyzes the last step releasing glucose from the inhibitory cellobiose. The chain is Probable beta-glucosidase A (bglA) from Neosartorya fischeri (strain ATCC 1020 / DSM 3700 / CBS 544.65 / FGSC A1164 / JCM 1740 / NRRL 181 / WB 181) (Aspergillus fischerianus).